We begin with the raw amino-acid sequence, 292 residues long: Probable 2-(5''-triphosphoribosyl)-3'-dephosphocoenzyme-A synthase (292 aa).

It belongs to the CitG/MdcB family.

It catalyses the reaction 3'-dephospho-CoA + ATP = 2'-(5''-triphospho-alpha-D-ribosyl)-3'-dephospho-CoA + adenine. The protein is Probable 2-(5''-triphosphoribosyl)-3'-dephosphocoenzyme-A synthase of Shigella boydii serotype 18 (strain CDC 3083-94 / BS512).